The sequence spans 453 residues: Trypanin (453 aa).

Residues 1–10 (MPPRTAAERG) show a composition bias toward basic and acidic residues. The tract at residues 1 to 22 (MPPRTAAERGGRRKSVKAPPPV) is disordered. Coiled coils occupy residues 60–156 (TITK…EMNV) and 185–377 (SCEA…LVEE).

The protein belongs to the DRC4 family.

It localises to the cytoplasm. Its subcellular location is the cytoskeleton. The protein localises to the cell projection. The protein resides in the cilium. It is found in the flagellum. Its function is as follows. Cytoskeletal linker that plays a central role in the flagellum cell motility. Required for directional cell motility. Plays a role as part of a dynein regulatory system that regulates flagellar beat in response to signals from the central pair apparatus and radial spokes in procyclic cells. Also plays an essential role in the bloodstream form of the trypanosomes as its silencing is lethal for the circulating form. In Trypanosoma brucei rhodesiense, this protein is Trypanin.